Reading from the N-terminus, the 199-residue chain is Outer-membrane lipoprotein LolB (199 aa).

Positions 1–28 (MSACPAPRSPVRWLHAFTLFLLLAVLAG) are cleaved as a signal peptide. Residue cysteine 29 is the site of N-palmitoyl cysteine attachment. The S-diacylglycerol cysteine moiety is linked to residue cysteine 29.

The protein belongs to the LolB family. In terms of assembly, monomer.

Its subcellular location is the cell outer membrane. Functionally, plays a critical role in the incorporation of lipoproteins in the outer membrane after they are released by the LolA protein. The protein is Outer-membrane lipoprotein LolB of Bordetella pertussis (strain Tohama I / ATCC BAA-589 / NCTC 13251).